A 731-amino-acid polypeptide reads, in one-letter code: T-cell activation Rho GTPase-activating protein (731 aa).

The Rho-GAP domain occupies 88–277 (QPLSIICGDS…FLIDNCFEIF (190 aa)). Disordered stretches follow at residues 288 to 421 (TSDD…AEDP), 464 to 507 (SLDA…IKKH), and 641 to 662 (HHVE…GLSP). Polar residues predominate over residues 299-311 (SDVSTLQNDSAYD). Low complexity predominate over residues 319-329 (SNSSSGISSPS). The segment covering 380-399 (SMPSSQECLESRVTNQTLTK) has biased composition (polar residues). S400 carries the phosphoserine modification. Over residues 464–480 (SLDASSDSSPVASPSSP) the composition is skewed to low complexity. Composition is skewed to basic and acidic residues over residues 494–503 (KTEKGKPSRE) and 641–652 (HHVEDSRHRGSK).

In terms of biological role, may function as a GTPase-activating protein and may play important roles during T-cell activation. The sequence is that of T-cell activation Rho GTPase-activating protein (TAGAP) from Homo sapiens (Human).